A 726-amino-acid chain; its full sequence is Disintegrin and metalloproteinase domain-containing protein 20 (726 aa).

The signal sequence occupies residues 1–31 (MAVGEPLVHIRVTLLLLWFGMFLSISGHSQA). A propeptide spanning residues 32 to 206 (RPSQYFTSPE…SSFVGWWTHQ (175 aa)) is cleaved from the precursor. The Cysteine switch signature appears at 171–178 (MRCGLTEE). C173 contributes to the Zn(2+) binding site. N191 and N226 each carry an N-linked (GlcNAc...) asparagine glycan. Residues 207-400 (RFVELVVVVD…SGLCIQPPPY (194 aa)) enclose the Peptidase M12B domain. Over 207 to 693 (RFVELVVVVD…GLNVMGKLRY (487 aa)) the chain is Extracellular. 3 disulfides stabilise this stretch: C317/C394, C357/C379, and C359/C364. A Zn(2+)-binding site is contributed by H342. The active site involves E343. Zn(2+) contacts are provided by H346 and H352. 4 N-linked (GlcNAc...) asparagine glycosylation sites follow: N378, N438, N479, and N587. Residues 407-493 (LKYCGNLVVE…QCPDDVYVQD (87 aa)) form the Disintegrin domain. A disulfide bridge connects residues C465 and C485. 3 disulfide bridges follow: C635–C646, C640–C652, and C654–C663. Positions 635-663 (CQPKTCNMRGICNNKQHCHCNHEWAPPYC) constitute an EGF-like domain. The chain crosses the membrane as a helical span at residues 694-714 (LSLLCLLPLVAFLLFCLHVLF). Over 715-726 (KKRTKSKEDEEG) the chain is Cytoplasmic.

The cofactor is Zn(2+). Post-translationally, has no obvious cleavage site for furin endopeptidase, suggesting that the proteolytic processing is regulated. Testis specific.

The protein resides in the membrane. Functionally, may be involved in sperm maturation and/or fertilization. The chain is Disintegrin and metalloproteinase domain-containing protein 20 (ADAM20) from Homo sapiens (Human).